The following is a 224-amino-acid chain: Small ribosomal subunit protein uS3c (224 aa).

Residues 43-124 (IKNYIQKNRK…RLNIAIEKVK (82 aa)) enclose the KH type-2 domain.

This sequence belongs to the universal ribosomal protein uS3 family. Part of the 30S ribosomal subunit.

The protein localises to the plastid. Its subcellular location is the chloroplast. The sequence is that of Small ribosomal subunit protein uS3c (rps3) from Saccharum hybrid (Sugarcane).